A 309-amino-acid polypeptide reads, in one-letter code: D-alanine--D-alanine ligase (309 aa).

In terms of domain architecture, ATP-grasp spans 109 to 304 (KMVWAACGLP…FTALCLAILE (196 aa)). 135 to 190 (VAELGLPIFVKPVHEGSSMGATKVTAASQLKAAWERAARFDDLVLAEEFIVGAELT) lines the ATP pocket. Residues aspartate 258, glutamate 271, and asparagine 273 each contribute to the Mg(2+) site.

The protein belongs to the D-alanine--D-alanine ligase family. Mg(2+) is required as a cofactor. Mn(2+) serves as cofactor.

The protein localises to the cytoplasm. It catalyses the reaction 2 D-alanine + ATP = D-alanyl-D-alanine + ADP + phosphate + H(+). It participates in cell wall biogenesis; peptidoglycan biosynthesis. Its function is as follows. Cell wall formation. The polypeptide is D-alanine--D-alanine ligase (Aromatoleum aromaticum (strain DSM 19018 / LMG 30748 / EbN1) (Azoarcus sp. (strain EbN1))).